Here is a 506-residue protein sequence, read N- to C-terminus: Maturase K (506 aa).

It belongs to the intron maturase 2 family. MatK subfamily.

The protein resides in the plastid. Its subcellular location is the chloroplast. Its function is as follows. Usually encoded in the trnK tRNA gene intron. Probably assists in splicing its own and other chloroplast group II introns. This is Maturase K from Carica papaya (Papaya).